The primary structure comprises 476 residues: Monofunctional riboflavin biosynthesis protein RIBA 2, chloroplastic (476 aa).

Residues 1 to 54 (MASLTLRCDSTHLLPSRDVVKGTKPFGTSLVYPRIISKKFNVRMRVIPEEGDVF) constitute a chloroplast transit peptide. The segment at 44–306 (MRVIPEEGDV…IADLIRYRRK (263 aa)) is DHBP synthase. D-ribulose 5-phosphate contacts are provided by residues 130-131 (RE), D135, 245-249 (RAGHT), and E269. E131 contacts Mg(2+). H248 is a Mg(2+) binding site. The inactive GTP cyclohydrolase II stretch occupies residues 307-476 (RERLVEFTAV…SGKVPLITTP (170 aa)). GTP contacts are provided by residues 357–361 (RVHAE), Q376, 399–401 (ESK), and T450.

In the N-terminal section; belongs to the DHBP synthase family. The protein in the C-terminal section; belongs to the GTP cyclohydrolase II family. It depends on Mg(2+) as a cofactor. Mn(2+) serves as cofactor. In terms of tissue distribution, expressed in leaves, shoots, roots, flowers and siliques.

It is found in the plastid. Its subcellular location is the chloroplast. It catalyses the reaction D-ribulose 5-phosphate = (2S)-2-hydroxy-3-oxobutyl phosphate + formate + H(+). It participates in cofactor biosynthesis; riboflavin biosynthesis; 2-hydroxy-3-oxobutyl phosphate from D-ribulose 5-phosphate: step 1/1. Functionally, involved in riboflavin biosynthesis. Catalyzes the conversion of D-ribulose 5-phosphate to formate and 3,4-dihydroxy-2-butanone 4-phosphate. RIBA2 and RIBA3 together are not able to complement the loss of function of RIBA1. In Arabidopsis thaliana (Mouse-ear cress), this protein is Monofunctional riboflavin biosynthesis protein RIBA 2, chloroplastic (RIBA2).